Reading from the N-terminus, the 943-residue chain is Protein translocase subunit SecA (943 aa).

Residues Gln90, Gly108 to Thr112, and Asp509 each bind ATP. A disordered region spans residues Pro535–Lys564.

This sequence belongs to the SecA family. In terms of assembly, monomer and homodimer. Part of the essential Sec protein translocation apparatus which comprises SecA, SecYEG and auxiliary proteins SecDF. Other proteins may also be involved.

It localises to the cell inner membrane. Its subcellular location is the cellular thylakoid membrane. The protein resides in the cytoplasm. The enzyme catalyses ATP + H2O + cellular proteinSide 1 = ADP + phosphate + cellular proteinSide 2.. In terms of biological role, part of the Sec protein translocase complex. Interacts with the SecYEG preprotein conducting channel. Has a central role in coupling the hydrolysis of ATP to the transfer of proteins into and across the cell membrane, serving as an ATP-driven molecular motor driving the stepwise translocation of polypeptide chains across the membrane. Its function is as follows. Probably participates in protein translocation into and across both the cytoplasmic and thylakoid membranes in cyanobacterial cells. The protein is Protein translocase subunit SecA of Prochlorococcus marinus (strain MIT 9215).